The primary structure comprises 82 residues: Kappa-actitoxin-Avd4j (82 aa).

Residues 1-19 (MNKALFLCLVVLCAAVVFA) form the signal peptide. A propeptide spanning residues 20-31 (AEDLQKAKHAPF) is cleaved from the precursor. Intrachain disulfides connect Cys38–Cys73, Cys40–Cys66, and Cys56–Cys74.

It belongs to the sea anemone type 3 (BDS) potassium channel toxin family. As to expression, weakly expressed in the ectodermal tissue from the distal and proximal tentacles, body wall, and oral disk.

It is found in the secreted. The protein localises to the nematocyst. Functionally, blocks Kv3 voltage-gated potassium channels. Reduces blood pressure. In Anemonia viridis (Snakelocks anemone), this protein is Kappa-actitoxin-Avd4j.